Reading from the N-terminus, the 547-residue chain is CAP-Gly domain-containing linker protein 3 (547 aa).

The interval 1-49 (MTKTDPAPMAPPPRGEEEEEEEEDEPVPEAPSPTQERRQKPVVHPSAPA) is disordered. Residues 16–27 (EEEEEEEEDEPV) show a composition bias toward acidic residues. 3 ANK repeats span residues 117 to 155 (TDMT…DVTL), 160 to 189 (TNMN…PRVV), and 197 to 226 (NHGS…NPAL). In terms of domain architecture, CAP-Gly 1 spans 314–356 (GTTEFASGQWVGVELDEPEGKNDGSVGGVRYFICPPKQGLFAS). The tract at residues 365-413 (DAPPSSVTSTPRTPRMDFSRVTGKGRREHKGKKKTPSSPSLGSLQQRDR) is disordered. Residues 367–377 (PPSSVTSTPRT) are compositionally biased toward low complexity. Thr374 is subject to Phosphothreonine. The span at 387-399 (GKGRREHKGKKKT) shows a compositional bias: basic residues. Residues 400-409 (PSSPSLGSLQ) show a composition bias toward polar residues. Ser401 carries the phosphoserine modification. The CAP-Gly 2 domain maps to 436 to 478 (GKTDFAPGYWYGIELDQPTGKHDGSVFGVRYFTCPPRHGVFAP). Positions 488–547 (STDSPGDSVGAKKVHQVTMTQPKRTFTTVRTPKDIASENSISRLLFCCWFPWMLRAEMQS) are goLD. Residues Cys534 and Cys535 are each lipidated (S-palmitoyl cysteine).

Homodimer. Interacts with AKT1 and AKT2; when AKT1 and AKT2 are phosphorylated and activated, affinity is higher for AKT2. Interacts with ZDHHC13 (via ANK repeats). Interacts with ZDHHC17 (via ANK repeats). In terms of processing, palmitoylation by ZDHHC17 regulates association with the plasma membrane.

The protein resides in the cell membrane. It is found in the cytoplasm. The protein localises to the golgi apparatus. It localises to the golgi stack. Functionally, functions as a cytoplasmic linker protein. Involved in TGN-endosome dynamics. May modulate the cellular compartmentalization of AKT kinase family and promote its cell membrane localization, thereby playing a role in glucose transport in adipocytes. The chain is CAP-Gly domain-containing linker protein 3 (CLIP3) from Pongo abelii (Sumatran orangutan).